The primary structure comprises 166 residues: MSNHDQKRDEGYIEKLVQVNRVAKTVKGGRIFTFTALTVVGDGKGRVGFGRGKSREVPAAIQKAMEAARRNMIQVDLNCTTLQYAMKSAHGASKVYMQPASEGTGIIAGGAMRAVLEVAGVQNVLAKCYGSTNPVNVVHATFKGLKGMQSPESIAAKRGKRVEEII.

In terms of domain architecture, S5 DRBM spans 12–75; the sequence is YIEKLVQVNR…EAARRNMIQV (64 aa).

It belongs to the universal ribosomal protein uS5 family. As to quaternary structure, part of the 30S ribosomal subunit. Contacts proteins S4 and S8.

With S4 and S12 plays an important role in translational accuracy. In terms of biological role, located at the back of the 30S subunit body where it stabilizes the conformation of the head with respect to the body. The sequence is that of Small ribosomal subunit protein uS5 from Pseudomonas savastanoi pv. phaseolicola (strain 1448A / Race 6) (Pseudomonas syringae pv. phaseolicola (strain 1448A / Race 6)).